The sequence spans 35 residues: Potassium channel toxin alpha-KTx 6.1 (35 aa).

4 disulfide bridges follow: cysteine 4/cysteine 25, cysteine 10/cysteine 30, cysteine 14/cysteine 32, and cysteine 20/cysteine 35.

Belongs to the short scorpion toxin superfamily. Potassium channel inhibitor family. Alpha-KTx 06 subfamily. In terms of tissue distribution, expressed by the venom gland.

Its subcellular location is the secreted. Its function is as follows. Potently and reversibly inhibits the insect voltage-gated Shaker (Sh) potassium channel (isoform alpha (B)), the mammalian voltage-gated potassium channels Kv1.2/KCNA2 (IC(50)=0.44 nM), and the calcium-activated potassium channel KCa2.3/KCNN3 (Kd=330 nM). Its effect on Kv1.3/KCNA3 is controversial, since this channel is voltage-independently inhibited in PubMed:9464266, but is not affected in PubMed:10931199. Furthermore, this toxin competes with apamin (a small conductance calcium-activated potassium channel inhibitor) for binding to rat brain synaptosomes. This Pandinus imperator (Emperor scorpion) protein is Potassium channel toxin alpha-KTx 6.1.